The following is a 252-amino-acid chain: U2 small nuclear ribonucleoprotein A' (252 aa).

LRR repeat units lie at residues 41-62 (PHDA…PLSP), 63-84 (RIRT…LPNA), and 87-108 (NLKN…EVLG). The LRRCT domain maps to 121-159 (NPVTKKENYRYWVLWLCPQVRFLDYVKVKDAERQKAKEL).

This sequence belongs to the U2 small nuclear ribonucleoprotein A family. As to quaternary structure, associated with the spliceosome.

The protein localises to the nucleus. Functionally, involved in pre-mRNA splicing. The protein is U2 small nuclear ribonucleoprotein A' (lea-1) of Neurospora crassa (strain ATCC 24698 / 74-OR23-1A / CBS 708.71 / DSM 1257 / FGSC 987).